The following is a 62-amino-acid chain: uncharacterized protein (62 aa).

This is an uncharacterized protein from Methanocaldococcus jannaschii (strain ATCC 43067 / DSM 2661 / JAL-1 / JCM 10045 / NBRC 100440) (Methanococcus jannaschii).